A 305-amino-acid polypeptide reads, in one-letter code: tRNA pseudouridine synthase B (305 aa).

The active-site Nucleophile is the D39.

Belongs to the pseudouridine synthase TruB family. Type 1 subfamily.

It catalyses the reaction uridine(55) in tRNA = pseudouridine(55) in tRNA. Its function is as follows. Responsible for synthesis of pseudouridine from uracil-55 in the psi GC loop of transfer RNAs. In Staphylococcus aureus (strain MSSA476), this protein is tRNA pseudouridine synthase B.